The following is a 238-amino-acid chain: Ribonuclease HII (238 aa).

One can recognise an RNase H type-2 domain in the interval 12-197 (GIVAGVDEAG…VLELLTDDLL (186 aa)). Residues D18, E19, and D107 each contribute to the a divalent metal cation site.

Belongs to the RNase HII family. It depends on Mn(2+) as a cofactor. The cofactor is Mg(2+).

Its subcellular location is the cytoplasm. It catalyses the reaction Endonucleolytic cleavage to 5'-phosphomonoester.. Endonuclease that specifically degrades the RNA of RNA-DNA hybrids. In Thermotoga maritima (strain ATCC 43589 / DSM 3109 / JCM 10099 / NBRC 100826 / MSB8), this protein is Ribonuclease HII (rnhB).